A 265-amino-acid polypeptide reads, in one-letter code: uncharacterized protein (265 aa).

2 disordered regions span residues T21–H53 and H78–S133. Over residues D90–S101 the composition is skewed to acidic residues. Over residues S114–V123 the composition is skewed to low complexity. ATP is bound at residue A137–S144.

This is an uncharacterized protein from Saccharomyces cerevisiae (strain ATCC 204508 / S288c) (Baker's yeast).